We begin with the raw amino-acid sequence, 88 residues long: Small ribosomal subunit protein uS15 (88 aa).

This sequence belongs to the universal ribosomal protein uS15 family. As to quaternary structure, part of the 30S ribosomal subunit. Forms a bridge to the 50S subunit in the 70S ribosome, contacting the 23S rRNA.

Functionally, one of the primary rRNA binding proteins, it binds directly to 16S rRNA where it helps nucleate assembly of the platform of the 30S subunit by binding and bridging several RNA helices of the 16S rRNA. Forms an intersubunit bridge (bridge B4) with the 23S rRNA of the 50S subunit in the ribosome. This is Small ribosomal subunit protein uS15 from Hydrogenovibrio crunogenus (strain DSM 25203 / XCL-2) (Thiomicrospira crunogena).